A 103-amino-acid chain; its full sequence is Small ribosomal subunit protein uS10 (103 aa).

Belongs to the universal ribosomal protein uS10 family. Part of the 30S ribosomal subunit.

Functionally, involved in the binding of tRNA to the ribosomes. This chain is Small ribosomal subunit protein uS10, found in Thioalkalivibrio sulfidiphilus (strain HL-EbGR7).